A 241-amino-acid polypeptide reads, in one-letter code: Pyridoxine 5'-phosphate synthase (241 aa).

Asparagine 7 is a binding site for 3-amino-2-oxopropyl phosphate. A 1-deoxy-D-xylulose 5-phosphate-binding site is contributed by 9–10; the sequence is DH. 3-amino-2-oxopropyl phosphate is bound at residue arginine 18. The active-site Proton acceptor is the histidine 43. Residues arginine 45 and histidine 50 each contribute to the 1-deoxy-D-xylulose 5-phosphate site. Residue glutamate 70 is the Proton acceptor of the active site. Residue threonine 100 participates in 1-deoxy-D-xylulose 5-phosphate binding. The Proton donor role is filled by histidine 191. Residues glycine 192 and 213–214 each bind 3-amino-2-oxopropyl phosphate; that span reads GH.

The protein belongs to the PNP synthase family. As to quaternary structure, homooctamer; tetramer of dimers.

Its subcellular location is the cytoplasm. It catalyses the reaction 3-amino-2-oxopropyl phosphate + 1-deoxy-D-xylulose 5-phosphate = pyridoxine 5'-phosphate + phosphate + 2 H2O + H(+). Its pathway is cofactor biosynthesis; pyridoxine 5'-phosphate biosynthesis; pyridoxine 5'-phosphate from D-erythrose 4-phosphate: step 5/5. Its function is as follows. Catalyzes the complicated ring closure reaction between the two acyclic compounds 1-deoxy-D-xylulose-5-phosphate (DXP) and 3-amino-2-oxopropyl phosphate (1-amino-acetone-3-phosphate or AAP) to form pyridoxine 5'-phosphate (PNP) and inorganic phosphate. In Nitrosospira multiformis (strain ATCC 25196 / NCIMB 11849 / C 71), this protein is Pyridoxine 5'-phosphate synthase.